The chain runs to 100 residues: Urease subunit gamma (100 aa).

The protein belongs to the urease gamma subunit family. Heterotrimer of UreA (gamma), UreB (beta) and UreC (alpha) subunits. Three heterotrimers associate to form the active enzyme.

It localises to the cytoplasm. The enzyme catalyses urea + 2 H2O + H(+) = hydrogencarbonate + 2 NH4(+). The protein operates within nitrogen metabolism; urea degradation; CO(2) and NH(3) from urea (urease route): step 1/1. This Rhodopseudomonas palustris (strain BisB5) protein is Urease subunit gamma.